Reading from the N-terminus, the 448-residue chain is Mitochondrial distribution and morphology protein 10 (448 aa).

This sequence belongs to the MDM10 family. As to quaternary structure, component of the ER-mitochondria encounter structure (ERMES) or MDM complex, composed of MMM1, MDM10, MDM12 and MDM34. Associates with the mitochondrial outer membrane sorting assembly machinery SAM(core) complex.

Its subcellular location is the mitochondrion outer membrane. Its function is as follows. Component of the ERMES/MDM complex, which serves as a molecular tether to connect the endoplasmic reticulum and mitochondria. Components of this complex are involved in the control of mitochondrial shape and protein biogenesis and may function in phospholipid exchange. MDM10 is involved in the late assembly steps of the general translocase of the mitochondrial outer membrane (TOM complex). Functions in the TOM40-specific route of the assembly of outer membrane beta-barrel proteins, including the association of TOM40 with the receptor TOM22 and small TOM proteins. Can associate with the SAM(core) complex as well as the MDM12-MMM1 complex, both involved in late steps of the major beta-barrel assembly pathway, that is responsible for biogenesis of all outer membrane beta-barrel proteins. May act as a switch that shuttles between both complexes and channels precursor proteins into the TOM40-specific pathway. Plays a role in mitochondrial morphology and in the inheritance of mitochondria. The polypeptide is Mitochondrial distribution and morphology protein 10 (Zygosaccharomyces rouxii (strain ATCC 2623 / CBS 732 / NBRC 1130 / NCYC 568 / NRRL Y-229)).